The chain runs to 355 residues: 3-isopropylmalate dehydrogenase (355 aa).

An NAD(+)-binding site is contributed by 78–91 (GYKWDNLPRPERPE). Residues Arg-98, Arg-136, and Asp-226 each contribute to the substrate site. 3 residues coordinate Mg(2+): Asp-226, Asp-250, and Asp-254. Position 284 to 296 (284 to 296 (GSAPDIAGQDKAN)) interacts with NAD(+).

This sequence belongs to the isocitrate and isopropylmalate dehydrogenases family. LeuB type 1 subfamily. In terms of assembly, homodimer. The cofactor is Mg(2+). Mn(2+) is required as a cofactor.

Its subcellular location is the cytoplasm. The enzyme catalyses (2R,3S)-3-isopropylmalate + NAD(+) = 4-methyl-2-oxopentanoate + CO2 + NADH. The protein operates within amino-acid biosynthesis; L-leucine biosynthesis; L-leucine from 3-methyl-2-oxobutanoate: step 3/4. In terms of biological role, catalyzes the oxidation of 3-carboxy-2-hydroxy-4-methylpentanoate (3-isopropylmalate) to 3-carboxy-4-methyl-2-oxopentanoate. The product decarboxylates to 4-methyl-2 oxopentanoate. The sequence is that of 3-isopropylmalate dehydrogenase (leuB) from Arthrospira platensis (Spirulina platensis).